The chain runs to 858 residues: Translation initiation factor IF-2 (858 aa).

The segment at 59–147 (KEHAEKRRER…GKKLEGQERK (89 aa)) is disordered. Residues 361 to 530 (PRPPVVVVMG…LLVADLLELK (170 aa)) form the tr-type G domain. Residues 370-377 (GHVDHGKT) are G1. 370–377 (GHVDHGKT) contributes to the GTP binding site. The tract at residues 395 to 399 (GITQH) is G2. Positions 416 to 419 (DTPG) are G3. GTP-binding positions include 416–420 (DTPGH) and 470–473 (NKID). Residues 470 to 473 (NKID) form a G4 region. A G5 region spans residues 506–508 (SAK).

Belongs to the TRAFAC class translation factor GTPase superfamily. Classic translation factor GTPase family. IF-2 subfamily.

It is found in the cytoplasm. Its function is as follows. One of the essential components for the initiation of protein synthesis. Protects formylmethionyl-tRNA from spontaneous hydrolysis and promotes its binding to the 30S ribosomal subunits. Also involved in the hydrolysis of GTP during the formation of the 70S ribosomal complex. This Caldicellulosiruptor saccharolyticus (strain ATCC 43494 / DSM 8903 / Tp8T 6331) protein is Translation initiation factor IF-2.